We begin with the raw amino-acid sequence, 163 residues long: Peptide deformylase 3 (163 aa).

Positions 91 and 133 each coordinate Fe cation. Glu134 is an active-site residue. His137 contributes to the Fe cation binding site.

It belongs to the polypeptide deformylase family. Fe(2+) is required as a cofactor.

It carries out the reaction N-terminal N-formyl-L-methionyl-[peptide] + H2O = N-terminal L-methionyl-[peptide] + formate. Its function is as follows. Removes the formyl group from the N-terminal Met of newly synthesized proteins. Requires at least a dipeptide for an efficient rate of reaction. N-terminal L-methionine is a prerequisite for activity but the enzyme has broad specificity at other positions. This is Peptide deformylase 3 from Shewanella oneidensis (strain ATCC 700550 / JCM 31522 / CIP 106686 / LMG 19005 / NCIMB 14063 / MR-1).